The primary structure comprises 789 residues: MTKPAADASAVLTAEDTLVLASTATPVEMELIMGWLGQQRARHPDSKFDILKLPPRNAPPAALTALVEQLEPGFASSPQSGEDRSIVPVRVIWLPPADRSRAGKVAALLPGRDPYHPSQRQQRRILRTDPRRARVVAGESAKVSELRQQWRDTTVAEHKRDFAQFVSRRALLALARAEYRILGPQYKSPRLVKPEMLASARFRAGLDRIPGATVEDAGKMLDELSTGWSQVSVDLVSVLGRLASRGFDPEFDYDEYQVAAMRAALEAHPAVLLFSHRSYIDGVVVPVAMQDNRLPPVHMFGGINLSFGLMGPLMRRSGMIFIRRNIGNDPLYKYVLKEYVGYVVEKRFNLSWSIEGTRSRTGKMLPPKLGLMSYVADAYLDGRSDDILLQGVSICFDQLHEITEYAAYARGAEKTPEGLRWLYNFIKAQGERNFGKIYVRFPEAVSMRQYLGAPHGELTQDPAAKRLALQKMSFEVAWRILQATPVTATGLVSALLLTTRGTALTLDQLHHTLQDSLDYLERKQSPVSTSALRLRSREGVRAAADALSNGHPVTRVDSGREPVWYIAPDDEHAAAFYRNSVIHAFLETSIVELALAHAKHAEGDRVAAFWAQAMRLRDLLKFDFYFADSTAFRANIAQEMAWHQDWEDHLGVGGNEIDAMLYAKRPLMSDAMLRVFFEAYEIVADVLRDAPPDIGPEELTELALGLGRQFVAQGRVRSSEPVSTLLFATARQVAVDQELIAPAADLAERRVAFRRELRNILRDFDYVEQIARNQFVACEFKARQGRDRI.

The short motif at 275–280 (SHRSYI) is the HXXXXD motif element.

It belongs to the GPAT/DAPAT family.

The protein resides in the cell membrane. It catalyses the reaction sn-glycerol 3-phosphate + an acyl-CoA = a 1-acyl-sn-glycero-3-phosphate + CoA. The protein operates within phospholipid metabolism; CDP-diacylglycerol biosynthesis; CDP-diacylglycerol from sn-glycerol 3-phosphate: step 1/3. The chain is Glycerol-3-phosphate acyltransferase from Mycobacterium tuberculosis (strain ATCC 25177 / H37Ra).